The primary structure comprises 102 residues: Large ribosomal subunit protein eL31 (102 aa).

The protein belongs to the eukaryotic ribosomal protein eL31 family.

This Staphylothermus marinus (strain ATCC 43588 / DSM 3639 / JCM 9404 / F1) protein is Large ribosomal subunit protein eL31.